The sequence spans 96 residues: Large ribosomal subunit protein uL15 (96 aa).

It belongs to the universal ribosomal protein uL15 family. As to quaternary structure, part of the 50S ribosomal subunit.

Functionally, binds to the 23S rRNA. The polypeptide is Large ribosomal subunit protein uL15 (rplO) (Streptomyces scabiei).